The chain runs to 214 residues: Cdc42 effector protein 2 (214 aa).

S2 is modified (N-acetylserine). The region spanning 30-44 (ISPPLGDFRHTIHIG) is the CRIB domain. Residues S31, S101, S137, S141, and S145 each carry the phosphoserine modification. Residues 119-177 (LTLPTAQAPPKPPRLHLESPQPSPQPSPQGAGNVDVWRIPEAGSPHNGMSPEPEAEEPF) are disordered.

Belongs to the BORG/CEP family. As to quaternary structure, interacts with CDC42 and RHOQ in a GTP-dependent manner, and with SEPT7.

The protein resides in the endomembrane system. It is found in the cytoplasm. It localises to the cytoskeleton. In terms of biological role, probably involved in the organization of the actin cytoskeleton. May act downstream of CDC42 to induce actin filament assembly leading to cell shape changes. Induces pseudopodia formation in fibroblasts in a CDC42-dependent manner. This is Cdc42 effector protein 2 (Cdc42ep2) from Mus musculus (Mouse).